Reading from the N-terminus, the 134-residue chain is Cytochrome b (134 aa).

Helical transmembrane passes span F33 to M53, W77 to V98, and W113 to L133. Heme b contacts are provided by H83 and H97.

This sequence belongs to the cytochrome b family. In terms of assembly, the cytochrome bc1 complex contains 11 subunits: 3 respiratory subunits (MT-CYB, CYC1 and UQCRFS1), 2 core proteins (UQCRC1 and UQCRC2) and 6 low-molecular weight proteins (UQCRH/QCR6, UQCRB/QCR7, UQCRQ/QCR8, UQCR10/QCR9, UQCR11/QCR10 and a cleavage product of UQCRFS1). This cytochrome bc1 complex then forms a dimer. Heme b serves as cofactor.

It is found in the mitochondrion inner membrane. In terms of biological role, component of the ubiquinol-cytochrome c reductase complex (complex III or cytochrome b-c1 complex) that is part of the mitochondrial respiratory chain. The b-c1 complex mediates electron transfer from ubiquinol to cytochrome c. Contributes to the generation of a proton gradient across the mitochondrial membrane that is then used for ATP synthesis. The chain is Cytochrome b (MT-CYB) from Sorex shinto sadonis (Sado shrew).